A 356-amino-acid chain; its full sequence is Protein RecA (356 aa).

68 to 75 (GQESSGKT) serves as a coordination point for ATP.

It belongs to the RecA family.

The protein localises to the cytoplasm. Can catalyze the hydrolysis of ATP in the presence of single-stranded DNA, the ATP-dependent uptake of single-stranded DNA by duplex DNA, and the ATP-dependent hybridization of homologous single-stranded DNAs. It interacts with LexA causing its activation and leading to its autocatalytic cleavage. This Thermotoga sp. (strain RQ2) protein is Protein RecA.